The following is a 142-amino-acid chain: Inner membrane protein YqaA (142 aa).

At M1–S2 the chain is on the cytoplasmic side. Residues E3 to G23 form a helical membrane-spanning segment. Residues N24–E26 are Periplasmic-facing. A helical transmembrane segment spans residues V27 to A47. At T48 to A86 the chain is on the cytoplasmic side. The helical transmembrane segment at V87–W107 threads the bilayer. At M108–H142 the chain is on the periplasmic side.

It to H.influenzae HI_0489.

It is found in the cell inner membrane. The protein is Inner membrane protein YqaA (yqaA) of Escherichia coli (strain K12).